A 97-amino-acid polypeptide reads, in one-letter code: Plasmid stability protein StbC (97 aa).

In terms of biological role, involved in plasmid stability. This Pseudomonas syringae pv. tomato (strain ATCC BAA-871 / DC3000) protein is Plasmid stability protein StbC (stbC).